Consider the following 494-residue polypeptide: Catalase isozyme 2 (494 aa).

The interval 1 to 29 (MDPCKFRPSSSFDTKTTTTNAGQPVWNDN) is disordered. Over residues 8–22 (PSSSFDTKTTTTNAG) the composition is skewed to polar residues. Residues His65 and Asn138 contribute to the active site. Tyr348 serves as a coordination point for heme.

It belongs to the catalase family. Homotetramer. Heme is required as a cofactor.

The protein localises to the peroxisome. Its subcellular location is the glyoxysome. It carries out the reaction 2 H2O2 = O2 + 2 H2O. In terms of biological role, occurs in almost all aerobically respiring organisms and serves to protect cells from the toxic effects of hydrogen peroxide. The polypeptide is Catalase isozyme 2 (CAT2) (Hordeum vulgare (Barley)).